We begin with the raw amino-acid sequence, 298 residues long: Protease HtpX homolog (298 aa).

The next 2 membrane-spanning stretches (helical) occupy residues 14-34 (VVLL…AGYL) and 39-59 (YAMG…SMIF). His-143 contacts Zn(2+). Glu-144 is an active-site residue. His-147 serves as a coordination point for Zn(2+). Helical transmembrane passes span 158–178 (IAVA…RMLW) and 197–217 (IITL…ASLI). Glu-226 is a binding site for Zn(2+).

The protein belongs to the peptidase M48B family. Requires Zn(2+) as cofactor.

It is found in the cell membrane. The protein is Protease HtpX homolog of Streptococcus pyogenes serotype M28 (strain MGAS6180).